The following is a 264-amino-acid chain: H-2 class II histocompatibility antigen, I-A beta chain (264 aa).

An N-terminal signal peptide occupies residues 1 to 31; it reads MVWLPRVPCVAAVILLLTVLSPPVALVRDSR. The interval 32 to 121 is beta-1; it reads PWFLEYCKSE…IFDNFLVPRR (90 aa). Residues 32 to 225 lie on the Extracellular side of the membrane; that stretch reads PWFLEYCKSE…KAQSTSAQNK (194 aa). Disulfide bonds link Cys42–Cys106 and Cys144–Cys200. Asn46 carries N-linked (GlcNAc...) asparagine glycosylation. The tract at residues 122 to 215 is beta-2; that stretch reads VEPTVTVYPT…SLTDPVTVEW (94 aa). Residues 124 to 214 form the Ig-like C1-type domain; the sequence is PTVTVYPTKT…PSLTDPVTVE (91 aa). Residues 216–225 are connecting peptide; that stretch reads KAQSTSAQNK. The chain crosses the membrane as a helical span at residues 226 to 248; sequence MLSGVGGFVLGLLFLRAGLFIYF. Topologically, residues 249 to 264 are cytoplasmic; that stretch reads RNQKGQSGLQPTGLLS.

It belongs to the MHC class II family. Ubiquitinated in immature dendritic cells leading to down-regulation of MHC class II.

The protein localises to the membrane. The chain is H-2 class II histocompatibility antigen, I-A beta chain (H2-Eb1) from Mus musculus (Mouse).